Here is a 113-residue protein sequence, read N- to C-terminus: UPF0060 membrane protein Arth_4423 (113 aa).

4 helical membrane passes run 7–27, 33–53, 62–82, and 91–111; these read VLLFILAAVAEIGGAWLVWQA, AWWWAGLGIIALGLYGFVATL, ILAAYGGVFVAGSLVWGMVFD, and VIGSVICLVGVAVIMFAPRGT.

Belongs to the UPF0060 family.

Its subcellular location is the cell membrane. In Arthrobacter sp. (strain FB24), this protein is UPF0060 membrane protein Arth_4423.